The sequence spans 299 residues: Glutamyl-Q tRNA(Asp) synthetase (299 aa).

L-glutamate-binding positions include 18-22 (RFAPS) and Glu54. Positions 21–31 (PSPSGALHFGS) match the 'HIGH' region motif. The Zn(2+) site is built by Cys110, Cys112, Tyr124, and Cys128. Tyr181 and Arg199 together coordinate L-glutamate. A 'KMSKS' region motif is present at residues 237 to 241 (KLSKQ). Residue Lys240 coordinates ATP.

The protein belongs to the class-I aminoacyl-tRNA synthetase family. GluQ subfamily. It depends on Zn(2+) as a cofactor.

Functionally, catalyzes the tRNA-independent activation of glutamate in presence of ATP and the subsequent transfer of glutamate onto a tRNA(Asp). Glutamate is transferred on the 2-amino-5-(4,5-dihydroxy-2-cyclopenten-1-yl) moiety of the queuosine in the wobble position of the QUC anticodon. This Shewanella oneidensis (strain ATCC 700550 / JCM 31522 / CIP 106686 / LMG 19005 / NCIMB 14063 / MR-1) protein is Glutamyl-Q tRNA(Asp) synthetase.